The primary structure comprises 484 residues: tRNA sulfurtransferase (484 aa).

Residues 62 to 166 (GPVIDELVRI…DDSYHIAHRR (105 aa)) enclose the THUMP domain. ATP-binding positions include 184-185 (LI), Lys266, Gly288, and Gln297. A disulfide bridge connects residues Cys345 and Cys456. The Rhodanese domain occupies 404–482 (PSVDDVIIDV…GHGNIKVYAP (79 aa)). Catalysis depends on Cys456, which acts as the Cysteine persulfide intermediate.

The protein belongs to the ThiI family.

It is found in the cytoplasm. It carries out the reaction [ThiI sulfur-carrier protein]-S-sulfanyl-L-cysteine + a uridine in tRNA + 2 reduced [2Fe-2S]-[ferredoxin] + ATP + H(+) = [ThiI sulfur-carrier protein]-L-cysteine + a 4-thiouridine in tRNA + 2 oxidized [2Fe-2S]-[ferredoxin] + AMP + diphosphate. It catalyses the reaction [ThiS sulfur-carrier protein]-C-terminal Gly-Gly-AMP + S-sulfanyl-L-cysteinyl-[cysteine desulfurase] + AH2 = [ThiS sulfur-carrier protein]-C-terminal-Gly-aminoethanethioate + L-cysteinyl-[cysteine desulfurase] + A + AMP + 2 H(+). It participates in cofactor biosynthesis; thiamine diphosphate biosynthesis. In terms of biological role, catalyzes the ATP-dependent transfer of a sulfur to tRNA to produce 4-thiouridine in position 8 of tRNAs, which functions as a near-UV photosensor. Also catalyzes the transfer of sulfur to the sulfur carrier protein ThiS, forming ThiS-thiocarboxylate. This is a step in the synthesis of thiazole, in the thiamine biosynthesis pathway. The sulfur is donated as persulfide by IscS. In Marinobacter nauticus (strain ATCC 700491 / DSM 11845 / VT8) (Marinobacter aquaeolei), this protein is tRNA sulfurtransferase.